Here is a 148-residue protein sequence, read N- to C-terminus: Small ribosomal subunit protein uS9 (148 aa).

This sequence belongs to the universal ribosomal protein uS9 family.

The protein is Small ribosomal subunit protein uS9 (RpS16) of Aedes aegypti (Yellowfever mosquito).